The following is a 263-amino-acid chain: Hydroxyethylthiazole kinase (263 aa).

M39 contacts substrate. ATP contacts are provided by K115 and T160. Residue G187 participates in substrate binding.

This sequence belongs to the Thz kinase family. Mg(2+) serves as cofactor.

The catalysed reaction is 5-(2-hydroxyethyl)-4-methylthiazole + ATP = 4-methyl-5-(2-phosphooxyethyl)-thiazole + ADP + H(+). Its pathway is cofactor biosynthesis; thiamine diphosphate biosynthesis; 4-methyl-5-(2-phosphoethyl)-thiazole from 5-(2-hydroxyethyl)-4-methylthiazole: step 1/1. In terms of biological role, catalyzes the phosphorylation of the hydroxyl group of 4-methyl-5-beta-hydroxyethylthiazole (THZ). The sequence is that of Hydroxyethylthiazole kinase from Staphylococcus aureus (strain bovine RF122 / ET3-1).